The sequence spans 336 residues: UPF0324 membrane protein BT_1919 (336 aa).

The next 8 membrane-spanning stretches (helical) occupy residues 2–19 (LHGV…FYIG), 23–45 (FVRS…YANS), 85–107 (IGLP…GIYL), 117–134 (IALL…AAIL), 147–169 (TAVS…PFLY), 210–232 (AIIV…TYLV), 253–275 (WFAI…AQLV), and 310–332 (FVLA…KYLT).

The protein belongs to the UPF0324 family.

Its subcellular location is the cell membrane. The polypeptide is UPF0324 membrane protein BT_1919 (Bacteroides thetaiotaomicron (strain ATCC 29148 / DSM 2079 / JCM 5827 / CCUG 10774 / NCTC 10582 / VPI-5482 / E50)).